An 846-amino-acid chain; its full sequence is Inactive cap-specific mRNA (nucleoside-2'-O-)-methyltransferase 1B (846 aa).

A disordered region spans residues 30-50; it reads DDEDDFVDDPSPTEQKTKAEK. The G-patch domain occupies 44-90; sequence QKTKAEKKMERMGYKAGEGLGKNKQGIQEPIAISFREGKAGLGHEQW. The 230-residue stretch at 184–413 folds into the RrmJ-type SAM-dependent 2'-O-MTase domain; the sequence is FFLNRSAMKT…ERFVVCKGLR (230 aa).

The polypeptide is Inactive cap-specific mRNA (nucleoside-2'-O-)-methyltransferase 1B (Caenorhabditis briggsae).